The primary structure comprises 387 residues: UDP-Gal:alpha-D-GlcNAc-diphosphoundecaprenol alpha-1,3-galactosyltransferase (387 aa).

This sequence belongs to the glycosyltransferase group 1 family. Glycosyltransferase 4 subfamily. Mg(2+) serves as cofactor. Mn(2+) is required as a cofactor. Requires Fe(2+) as cofactor.

The catalysed reaction is N-acetyl-alpha-D-glucosaminyl-di-trans,octa-cis-undecaprenyl diphosphate + UDP-alpha-D-galactose = alpha-D-Gal-(1-&gt;3)-alpha-D-GlcNAc-di-trans,octa-cis-undecaprenyl diphosphate + UDP + H(+). It participates in bacterial outer membrane biogenesis; LPS O-antigen biosynthesis. Its function is as follows. Involved in the biosynthesis of the lipopolysaccharide (LPS) O-antigen region. Catalyzes the transfer of galactose from UDP-galactose to GlcNAc-undecaprenyl diphosphate via an alpha1,3-linkage. Has strict substrate specificity. In Escherichia coli, this protein is UDP-Gal:alpha-D-GlcNAc-diphosphoundecaprenol alpha-1,3-galactosyltransferase.